A 1571-amino-acid polypeptide reads, in one-letter code: Phospholipid-transporting ATPase DNF1 (1571 aa).

The tract at residues 1-94 (MSGTFHGDGH…TPKLNNGSGT (94 aa)) is disordered. The Cytoplasmic segment spans residues 1 to 214 (MSGTFHGDGH…TFLPKNILFQ (214 aa)). Positions 29-40 (EDTHIAPTHFDD) are enriched in basic and acidic residues. Residues 42-56 (ATSNKYSRPQVSFND) are compositionally biased toward polar residues. A Phosphoserine modification is found at Ser-53. Positions 66–76 (AEEFTFNDDTE) are enriched in acidic residues. A Phosphothreonine modification is found at Thr-70. The segment covering 80–93 (HSFQPTPKLNNGSG) has biased composition (polar residues). Ser-81 is modified (phosphoserine). Position 85 is a phosphothreonine (Thr-85). Ser-92 bears the Phosphoserine mark. The residue at position 94 (Thr-94) is a Phosphothreonine. Ser-104 bears the Phosphoserine mark. Thr-109 carries the post-translational modification Phosphothreonine. Residues 215–235 (FHNFANVYFLVLIILGAFQIF) form a helical membrane-spanning segment. The tract at residues 234 to 241 (IFGVTNPG) is involved in phosphatidylcholine substrate selection. The Extracellular segment spans residues 236–239 (GVTN). The chain crosses the membrane as a helical span at residues 240 to 260 (PGLSAVPLVVIVIITAIKDAI). Topologically, residues 261–553 (EDSRRTVLDL…RISRELNFSV (293 aa)) are cytoplasmic. Residues Ser-351, Ser-354, Ser-358, and Ser-365 each carry the phosphoserine modification. The residue at position 368 (Tyr-368) is a Phosphotyrosine. The chain crosses the membrane as a helical span at residues 554-574 (VINFVLLFILCFVSGIANGVY). At 575–594 (YDKKGRSRFSYEFGTIAGSA) the chain is on the extracellular side. The interval 586-590 (EFGTI) is involved in phosphatidylcholine substrate selection. The chain crosses the membrane as a helical span at residues 595–615 (ATNGFVSFWVAVILYQSLVPI). Topologically, residues 616–1188 (SLYISVEIIK…WSYKRLAEMI (573 aa)) are cytoplasmic. Asp-667 functions as the 4-aspartylphosphate intermediate in the catalytic mechanism. The ATP site is built by Asp-667, Lys-668, Thr-669, Glu-801, Phe-842, Ser-844, Lys-847, and Lys-871. Asp-667 lines the Mg(2+) pocket. Residue Thr-669 coordinates Mg(2+). A Glycyl lysine isopeptide (Lys-Gly) (interchain with G-Cter in ubiquitin) cross-link involves residue Lys-895. ATP-binding residues include Arg-909, Thr-910, Thr-989, Gly-990, Asp-991, Arg-1104, and Lys-1110. Asp-1130 serves as a coordination point for Mg(2+). Residues Asn-1133 and Asp-1134 each contribute to the ATP site. Asp-1134 is a binding site for Mg(2+). The chain crosses the membrane as a helical span at residues 1189 to 1209 (PEFFYKNMIFALALFWYGIYN). Residues 1210–1219 (DFDGSYLYEY) are Extracellular-facing. A helical transmembrane segment spans residues 1220–1240 (TYMMFYNLAFTSLPVIFLGIL). Residues 1241-1270 (DQDVNDTISLVVPQLYRVGILRKEWNQRKF) are Cytoplasmic-facing. A helical transmembrane segment spans residues 1271–1291 (LWYMLDGLYQSIICFFFPYLV). Topologically, residues 1292 to 1307 (YHKNMIVTSNGLGLDH) are extracellular. Residues 1308-1328 (RYFVGVYVTTIAVISCNTYVL) form a helical membrane-spanning segment. At 1329–1334 (LHQYRW) the chain is on the cytoplasmic side. The chain crosses the membrane as a helical span at residues 1335 to 1355 (DWFSGLFIALSCLVVFAWTGI). Residues 1356-1375 (WSSAIASREFFKAAARIYGA) lie on the Extracellular side of the membrane. A helical membrane pass occupies residues 1376–1396 (PSFWAVFFVAVLFCLLPRFTY). Arg-1393 lines the a 1,2-diacyl-sn-glycero-3-phospho-L-serine pocket. Residues 1397-1571 (DSFQKFFYPT…ASLIGTQQNN (175 aa)) are Cytoplasmic-facing. Residue Ser-1506 is modified to Phosphoserine. Phosphothreonine is present on Thr-1551. Ser-1552 and Ser-1563 each carry phosphoserine.

Belongs to the cation transport ATPase (P-type) (TC 3.A.3) family. Type IV subfamily. In terms of assembly, component of a flippase complex consisting of DNF1 and LEM3. Interacts with LEM3; the interaction is direct and required for their mutual export from the endoplasmic reticulum. Requires Mg(2+) as cofactor. In terms of processing, phosphorylated by FPK1 and KIN82.

It localises to the cell membrane. Its subcellular location is the endosome membrane. The protein resides in the golgi apparatus. The protein localises to the trans-Golgi network membrane. It is found in the cell septum. It localises to the bud. The enzyme catalyses ATP + H2O + phospholipidSide 1 = ADP + phosphate + phospholipidSide 2.. The catalysed reaction is a 1,2-diacyl-sn-glycero-3-phosphoethanolamine(out) + ATP + H2O = a 1,2-diacyl-sn-glycero-3-phosphoethanolamine(in) + ADP + phosphate + H(+). It catalyses the reaction a 1,2-diacyl-sn-glycero-3-phosphocholine(out) + ATP + H2O = a 1,2-diacyl-sn-glycero-3-phosphocholine(in) + ADP + phosphate + H(+). It carries out the reaction a beta-D-glucosyl-(1&lt;-&gt;1')-N-acylsphing-4-enine(out) + ATP + H2O = a beta-D-glucosyl-(1&lt;-&gt;1')-N-acylsphing-4-enine(in) + ADP + phosphate + H(+). The enzyme catalyses a 1,2-diacyl-sn-glycero-3-phospho-L-serine(out) + ATP + H2O = a 1,2-diacyl-sn-glycero-3-phospho-L-serine(in) + ADP + phosphate + H(+). Its function is as follows. Catalytic component of a P4-ATPase flippase complex which catalyzes the hydrolysis of ATP coupled to the transport of glucosylceramide, phosphatidylcholine, phosphatidylethanolamine, and small amounts of phosphatidylserine from the lumenal to the cytosolic leaflet of the cell membrane and ensures the maintenance of asymmetric distribution of phospholipids. Does not appear to transport sphingomyelin, inositol phosphoceramide, or phosphatidic acid. Required for efficient endocytosis. The polypeptide is Phospholipid-transporting ATPase DNF1 (Saccharomyces cerevisiae (strain ATCC 204508 / S288c) (Baker's yeast)).